Consider the following 430-residue polypeptide: KIN17-like protein (430 aa).

The segment at 28-50 (CQMCQKQCRDENGFKCHCMSESH) adopts a C2H2-type zinc-finger fold. Positions 51 to 160 (QRQMQVFGQA…KARLKRKRIK (110 aa)) are winged helix-turn-helix (wHTH). Residues 147–183 (EQAVKARLKRKRIKSDLAEDERQERMIARQIERAQQS) are a coiled coil. A Nuclear localization signal (NLS) motif is present at residues 155 to 158 (KRKR). Disordered stretches follow at residues 179-230 (RAQQ…ANKA) and 261-284 (EEEDEVSARDKEKEELAKKKGKDA). Acidic residues predominate over residues 209–224 (EYSDSENDHEGQEEDA). Residues 261–278 (EEEDEVSARDKEKEELAK) show a composition bias toward basic and acidic residues. Residues 283–312 (DAINAAEARRSALDELMKEEEKAKERSNRK) are a coiled coil. Residues 319 to 370 (GIVVKVMSKSLAEKGYCKQKGVVKRVIDKYVGEIEMLESKHVLRVDQDELET) are C-terminal subdomain A. The interval 376 to 427 (GGLVRIVNGAYRGSNARLLSVDTERFCAKVQVEKGLYDGKVLKAIEYEDICK) is C-terminal subdomain B.

The protein belongs to the KIN17 family.

It localises to the nucleus. The polypeptide is KIN17-like protein (Oryza sativa subsp. indica (Rice)).